The primary structure comprises 197 residues: Protein GrpE (197 aa).

A disordered region spans residues 1 to 43 (MSSKEQKTPDGQAPEEIVTEQHEEVESVESAESAEQVDPRDEE).

The protein belongs to the GrpE family. As to quaternary structure, homodimer.

The protein localises to the cytoplasm. Its function is as follows. Participates actively in the response to hyperosmotic and heat shock by preventing the aggregation of stress-denatured proteins, in association with DnaK and GrpE. It is the nucleotide exchange factor for DnaK and may function as a thermosensor. Unfolded proteins bind initially to DnaJ; upon interaction with the DnaJ-bound protein, DnaK hydrolyzes its bound ATP, resulting in the formation of a stable complex. GrpE releases ADP from DnaK; ATP binding to DnaK triggers the release of the substrate protein, thus completing the reaction cycle. Several rounds of ATP-dependent interactions between DnaJ, DnaK and GrpE are required for fully efficient folding. This is Protein GrpE from Cronobacter sakazakii (strain ATCC BAA-894) (Enterobacter sakazakii).